The chain runs to 296 residues: Uridine phosphorylase A (296 aa).

Residues G46, R77, and 121–124 each bind phosphate; that span reads RLGT. Residues 125 to 126 and 201 to 203 contribute to the uridine site; these read SG and QGR.

Belongs to the PNP/UDP phosphorylase family. Homodimer.

The enzyme catalyses uridine + phosphate = alpha-D-ribose 1-phosphate + uracil. Its pathway is pyrimidine metabolism; UMP biosynthesis via salvage pathway; uracil from uridine (phosphorylase route): step 1/1. Its function is as follows. Catalyzes the reversible phosphorylytic cleavage of uridine and deoxyuridine to uracil and ribose- or deoxyribose-1-phosphate. The produced molecules are then utilized as carbon and energy sources or in the rescue of pyrimidine bases for nucleotide synthesis. The polypeptide is Uridine phosphorylase A (Schistosoma mansoni (Blood fluke)).